Here is a 56-residue protein sequence, read N- to C-terminus: Alpha-conotoxin Pn1.2 (56 aa).

The signal sequence occupies residues 1-16 (MFTVFLLVVLATTVVS). A propeptide spanning residues 17-39 (FTSDRASDGGNAAMSDLIALTIK) is cleaved from the precursor. Intrachain disulfides connect C41-C47 and C42-C55. Positions 43-45 (SHP) are ser-Xaa-Pro motif, crucial for potent interaction with nAChR. A Cysteine amide modification is found at C55.

Belongs to the conotoxin A superfamily. In terms of processing, non-native isomers 'ribbon' (with disulfide connectivity C1-C4; C2-C3) and 'beads' (with disulfide connectivity C1-C2; C3-C4) also inhibit high voltage-activated (HVA) calcium channel currents in rat DRG neurons (20-30% inhibition at 1 uM toxin). In terms of tissue distribution, expressed by the venom duct.

Its subcellular location is the secreted. Its function is as follows. Alpha-conotoxins act on postsynaptic membranes, they bind to the nicotinic acetylcholine receptors (nAChR) and thus inhibit them. This toxin inhibits human alpha-7/CHRNA7 and alpha-9-alpha-10/CHRNA9/CHRNA10 AChR (complete inhibition at 3 uM of toxin). In addition, this toxin inhibits high voltage-activated (HVA) calcium channel currents in rat DRG neurons (22% inhibition at 1 uM toxin) probably by activating GABA(B) receptors (GABBR1 and/or GABBR2). In Conus pennaceus (Feathered cone), this protein is Alpha-conotoxin Pn1.2.